Consider the following 62-residue polypeptide: Large ribosomal subunit protein uL29 (62 aa).

It belongs to the universal ribosomal protein uL29 family.

This chain is Large ribosomal subunit protein uL29, found in Geobacter sulfurreducens (strain ATCC 51573 / DSM 12127 / PCA).